We begin with the raw amino-acid sequence, 419 residues long: MHKLIIHGGTPLKGSINISGAKNAVLPIMAASILTDKLHITNVPKLTDVSTMKDLLRSHGADIEIIKHQDEFELIIDTKNINNFTADYEIVRKMRASIWVLGPLLTKYGKAKVSLPGGCAIGARQVDLHIAVLKAMGAEIEIEDGYINASSKGRLKGTHFVFDKVSVGATINAILVAVLAEGETVLFNCGREPEIVDLCNCLITMGADIAGIGTSEITIKGKDSLNKASYKVLSDRIEAGTYMFAAAITKGDVKICGIDYHIVENIALKLIETGIKVVPINNGVQVTYEGKLNSVDLETNPYPGFATDLQAQFMSLMTLSSGVSMITENIFENRFMHVPELCRMGADIVVRGNKAVVRGVEMLKGAEVMASDLRASVSLILAGLSTNSKTVLHRIYHLDRGFQDLEKKLSNCGADIKRV.

22 to 23 (KN) is a phosphoenolpyruvate binding site. Arg-95 contacts UDP-N-acetyl-alpha-D-glucosamine. The active-site Proton donor is the Cys-119. Cys-119 bears the 2-(S-cysteinyl)pyruvic acid O-phosphothioketal mark. UDP-N-acetyl-alpha-D-glucosamine contacts are provided by residues 164–167 (KVSV), Asp-308, and Ile-330.

It belongs to the EPSP synthase family. MurA subfamily.

It is found in the cytoplasm. It catalyses the reaction phosphoenolpyruvate + UDP-N-acetyl-alpha-D-glucosamine = UDP-N-acetyl-3-O-(1-carboxyvinyl)-alpha-D-glucosamine + phosphate. Its pathway is cell wall biogenesis; peptidoglycan biosynthesis. Functionally, cell wall formation. Adds enolpyruvyl to UDP-N-acetylglucosamine. The sequence is that of UDP-N-acetylglucosamine 1-carboxyvinyltransferase from Rickettsia rickettsii (strain Iowa).